The following is a 212-amino-acid chain: Large ribosomal subunit protein uL3 (212 aa).

A disordered region spans residues 135-156; the sequence is MTHGNSRSHRVPGSIGQNQSPG. Gln153 is modified (N5-methylglutamine).

This sequence belongs to the universal ribosomal protein uL3 family. As to quaternary structure, part of the 50S ribosomal subunit. Forms a cluster with proteins L14 and L19. Post-translationally, methylated by PrmB.

One of the primary rRNA binding proteins, it binds directly near the 3'-end of the 23S rRNA, where it nucleates assembly of the 50S subunit. In Tolumonas auensis (strain DSM 9187 / NBRC 110442 / TA 4), this protein is Large ribosomal subunit protein uL3.